The sequence spans 288 residues: Quinate/shikimate dehydrogenase (288 aa).

The substrate site is built by K71 and D107. NAD(+) is bound by residues 132–135 (AGGA), 155–158 (NRRD), K205, 232–235 (CVYN), and G255.

This sequence belongs to the shikimate dehydrogenase family. In terms of assembly, homodimer.

It carries out the reaction L-quinate + NAD(+) = 3-dehydroquinate + NADH + H(+). The enzyme catalyses L-quinate + NADP(+) = 3-dehydroquinate + NADPH + H(+). The catalysed reaction is shikimate + NADP(+) = 3-dehydroshikimate + NADPH + H(+). It catalyses the reaction shikimate + NAD(+) = 3-dehydroshikimate + NADH + H(+). The protein operates within metabolic intermediate biosynthesis; chorismate biosynthesis; chorismate from D-erythrose 4-phosphate and phosphoenolpyruvate: step 4/7. Its function is as follows. The actual biological function of YdiB remains unclear, nor is it known whether 3-dehydroshikimate or quinate represents the natural substrate. Catalyzes the reversible NAD-dependent reduction of both 3-dehydroshikimate (DHSA) and 3-dehydroquinate to yield shikimate (SA) and quinate, respectively. It can use both NAD or NADP for catalysis, however it has higher catalytic efficiency with NAD. This is Quinate/shikimate dehydrogenase from Shigella flexneri.